The sequence spans 726 residues: Methyltransferase FGSG_00040 (726 aa).

TPR repeat units lie at residues 187–220 (SSDI…GQNV), 224–257 (QLAF…AMPS), and 258–291 (EKSL…YPEN). An SET domain is found at 336 to 531 (APVEIRESPG…AKTEIFFCYR (196 aa)). Tyrosine 530 serves as a coordination point for S-adenosyl-L-methionine.

This sequence belongs to the class V-like SAM-binding methyltransferase superfamily.

It participates in mycotoxin biosynthesis. Methyltransferase; part of the gene cluster that mediates the biosynthesis of gramillins A and B, bicyclic lipopeptides that induce cell death in maize leaves but not in wheat leaves. The nonribosomal peptide synthetase GRA1 incorporates respectively a glutamic adic (Glu), a leucine (Leu), a serine (Ser), a hydroxyglutamine (HOGln), a 2-amino decanoic acid, and 2 cysteins (CysB and CysA). The biosynthesis of 2-amino decanoic acid incorporated in gramillins could be initiated by a fatty acid synthase composed of the alpha and beta subunits FGSG_00036 and FGSG_11656. The cytochrome P450 monooxygenase FGSG_15680 could hydroxylate the fatty acid chain. Subsequent oxidation to the ketone by the oxidoreductase FGSG_00048 and transamination by aminotransferase FGSG_00049 could form 2-amino-decanoic acid. On the other hand, FGSG_15680 could also be responsible for the HO-modified glutamine at the gamma-position. Whether hydroxylation occurs on the fully assembled product or on the Gln residue prior to assembly into the gramillins requires further proof. The thioredoxin FGSG_00043 could also be required for the disulfide-bond formation between CysA and CysB. The specific involvement of the remaining proteins from the cluster is more difficult to discern, but could have broader regulatory (FGSG_00040 and FGSG_11657) or enzymatic functions (FGSG_00044 and FGSG_00045). The final C-domain of GRA1 does not possess the expected sequence of a termination CT domain, often implicated in macrocyclization and release of a cyclopeptidein fungal NRPs; and the thioesterase FGSG_00047 may act in concert with the terminal C-domain of GRA1 to catalyze the formation of the macrocyclic anhydride and release of the products. This Gibberella zeae (strain ATCC MYA-4620 / CBS 123657 / FGSC 9075 / NRRL 31084 / PH-1) (Wheat head blight fungus) protein is Methyltransferase FGSG_00040.